Here is a 431-residue protein sequence, read N- to C-terminus: MDVQKELEKVIELTRSQNRWRRTETINLIASENVMSPLAEALYMSDFMSRYAEGKPFKRFYQGTKYVDEVETLAMDYMNQVTGSKFCDLRPTSGTLANAAVFRVLANPGDKALIAPVQAGAHVSHTKFGTLGALGIEHIEMPYDEENMNVDVDRAVKMIEQIKPKFVVLGGSLYLFPHPTKDLAPHVHSVGAKLVYDAAHVYGLMTGKVWSNPLDEGADFLNVSTHKTFPGPQGGAIFSNEEEEFKKVSRTIFPWFVSNHHLHRLPSTAVTALEMKVYGEDYAKQITRNSKALAEALASFGFKVIGEHLGYTKSHQVAVDVKNLGGGAYVAKTLESANIIVNKNLLPHDPPEAVNDPSGIRIGVQEMTRFGMKEGEMEEIAELMKQILVDKRDINEMRRKVTEMRSRFLEVKYALTYDLSKYNSKLIPMIL.

A (6S)-5,6,7,8-tetrahydrofolate-binding site is contributed by 121–123 (AHV). At Lys227 the chain carries N6-(pyridoxal phosphate)lysine.

It belongs to the SHMT family. As to quaternary structure, homodimer. Requires pyridoxal 5'-phosphate as cofactor.

The protein resides in the cytoplasm. It functions in the pathway amino-acid biosynthesis; glycine biosynthesis; glycine from L-serine: step 1/1. Functionally, catalyzes the reversible interconversion of serine and glycine with a modified folate serving as the one-carbon carrier. Also exhibits a pteridine-independent aldolase activity toward beta-hydroxyamino acids, producing glycine and aldehydes, via a retro-aldol mechanism. The chain is Serine hydroxymethyltransferase from Metallosphaera sedula (strain ATCC 51363 / DSM 5348 / JCM 9185 / NBRC 15509 / TH2).